A 587-amino-acid polypeptide reads, in one-letter code: GATA zinc finger domain-containing protein 3 (587 aa).

The span at 53-74 (NINNNINNNNNNNNNNNNNNIN) shows a compositional bias: low complexity. 3 disordered regions span residues 53 to 141 (NINN…LKIP), 179 to 294 (QLAH…SSPS), and 312 to 392 (QTSP…ATIN). Positions 75–86 (QYHQNHYDQYSD) are enriched in polar residues. Composition is skewed to low complexity over residues 87-136 (NNCN…NNNN), 183-202 (NSSM…TPTS), 237-264 (NING…INNG), 272-292 (GNNN…NSSS), and 316-333 (SQQS…QQSQ). 2 stretches are compositionally biased toward polar residues: residues 340–358 (INTT…TNSP) and 365–379 (NESS…TPLS). The GATA-type zinc-finger motif lies at 500–525 (CIFCGTMETPEWRKGPGGHKTLCNAC). The tract at residues 536–587 (ENQNNGGSPNPQQNNVTTTTTTTTSTSTNSPNSNGNNFSPESAMSVSKLISD) is disordered. A compositionally biased stretch (low complexity) spans 538-575 (QNNGGSPNPQQNNVTTTTTTTTSTSTNSPNSNGNNFSP). Over residues 577-587 (SAMSVSKLISD) the composition is skewed to polar residues.

This Dictyostelium discoideum (Social amoeba) protein is GATA zinc finger domain-containing protein 3 (gtaC).